A 306-amino-acid polypeptide reads, in one-letter code: MATAQLSHNTRTLKASKNTIFPSQVTNEHESLVVVKKLFATCISCITYLRGLFPESSYRDRRLDDLSLKILREDKKCPGSLHIIKWIQGCFDALEKRYLHMAVLTLYTNPKEPEKVTEIYQFRFKYTKKGTTMDFDSSSTSFESGTDSEDIKKACSLLIRQLYILMQNLGPLPNDVILTMKLHYYNSVTPHDYQPPGFKEAVNSHFLLFEGEPVSLRMGSVSSGFHSMKVKVTTEATRMLDGENSVSQDDGTTEIAHQGLDCDEEEEACGSQVQRMNFVHIEPSFESSRKKKKVSEPVTVFIPNRK.

In terms of domain architecture, HORMA spans 29-232 (HESLVVVKKL…SGFHSMKVKV (204 aa)). A Phosphoserine modification is found at S271.

In terms of assembly, interacts with HORMAD1. In terms of processing, phosphorylated in a SPO11-dependent manner. Specifically expressed in meiotic germ cells.

The protein localises to the nucleus. It is found in the chromosome. Functionally, essential for synapsis surveillance during meiotic prophase via the recruitment of ATR activity. Plays a key role in the male mid-pachytene checkpoint and the female meiotic prophase checkpoint: required for efficient build-up of ATR activity on unsynapsed chromosome regions, a process believed to form the basis of meiotic silencing of unsynapsed chromatin (MSUC) and meiotic prophase quality control in both sexes. Required for the DNA double-strand break-independent, BRCA1-dependent activation of ATR on the sex chromosomes that is essential for normal sex body formation. The polypeptide is HORMA domain-containing protein 2 (Hormad2) (Mus musculus (Mouse)).